The chain runs to 139 residues: MAERTFAIIKPDATRRNLEGPILSVIQQNGLRVVAMKKMRLTREQAEGFYHVHKERPFFASLTDFMTSGPIVAMVLEGDNAVARWRELMGATNPENAAEGTIRRQFAEGLEANSVHGSDAAETAAFEMGYFFNAMEITG.

ATP is bound by residues lysine 10, phenylalanine 58, arginine 86, threonine 92, arginine 103, and asparagine 113. The active-site Pros-phosphohistidine intermediate is histidine 116.

It belongs to the NDK family. In terms of assembly, homotetramer. Mg(2+) is required as a cofactor.

It localises to the cytoplasm. The enzyme catalyses a 2'-deoxyribonucleoside 5'-diphosphate + ATP = a 2'-deoxyribonucleoside 5'-triphosphate + ADP. It catalyses the reaction a ribonucleoside 5'-diphosphate + ATP = a ribonucleoside 5'-triphosphate + ADP. Functionally, major role in the synthesis of nucleoside triphosphates other than ATP. The ATP gamma phosphate is transferred to the NDP beta phosphate via a ping-pong mechanism, using a phosphorylated active-site intermediate. The protein is Nucleoside diphosphate kinase of Oleidesulfovibrio alaskensis (strain ATCC BAA-1058 / DSM 17464 / G20) (Desulfovibrio alaskensis).